Reading from the N-terminus, the 196-residue chain is Carnitine operon protein CaiE (196 aa).

The tract at residues 176–196 (LRQMEENRPRLQGTTDVAPKR) is disordered.

The protein belongs to the transferase hexapeptide repeat family.

The protein operates within amine and polyamine metabolism; carnitine metabolism. Overproduction of CaiE stimulates the activity of CaiB and CaiD. In Escherichia fergusonii (strain ATCC 35469 / DSM 13698 / CCUG 18766 / IAM 14443 / JCM 21226 / LMG 7866 / NBRC 102419 / NCTC 12128 / CDC 0568-73), this protein is Carnitine operon protein CaiE.